A 206-amino-acid polypeptide reads, in one-letter code: N-(5'-phosphoribosyl)anthranilate isomerase (206 aa).

Belongs to the TrpF family.

The catalysed reaction is N-(5-phospho-beta-D-ribosyl)anthranilate = 1-(2-carboxyphenylamino)-1-deoxy-D-ribulose 5-phosphate. The protein operates within amino-acid biosynthesis; L-tryptophan biosynthesis; L-tryptophan from chorismate: step 3/5. The protein is N-(5'-phosphoribosyl)anthranilate isomerase of Pseudomonas putida (strain GB-1).